The primary structure comprises 466 residues: MSTENDYIVADIGLADFGRKEITIAETEMPGLMACRAEFGETKPLKGARITGSLHMTIQTAVLIETLVALGAEVRWASCNIFSTQDHAAAAIAASGVPVYAIKGESLEDYWIYTDKIFQWADGGFSNMILDDGGDATMYILLGARAEAGEDVLSDPHSEEEEILFAQIKKRLKASPGWFTKQRDAIKGVTEETTTGVNRLYQLSQKGLLPFPAINVNDSVTKSKFDNKYGCKESLVDGIRRATDVMMAGKVAVVCGYGDVGKGSAASLSGAGARVKVTEVDPICALQAAMDGYEVVLLEDVVSSADIFISTTGNKDVIRIDHMRAMKDMAIVGNIGHFDNEIQVAALRNLKWTNVKPQVDLIEFAKGNRIILLSEGRLLNLGNATGHPSFVMSASFTNQTLAQIELFTKPGQYQNQVYVLPKHLDEKVARLHLGKLGVKLTELSGEQAAYIGVTPQGPFKSDHYRY.

Substrate is bound by residues threonine 57, aspartate 132, and glutamate 192. 193–195 (TTT) contacts NAD(+). Substrate-binding residues include lysine 222 and aspartate 226. NAD(+) contacts are provided by residues asparagine 227, 256–261 (GYGDVG), glutamate 279, asparagine 314, 335–337 (IGH), and asparagine 380.

This sequence belongs to the adenosylhomocysteinase family. NAD(+) serves as cofactor.

The protein localises to the cytoplasm. The enzyme catalyses S-adenosyl-L-homocysteine + H2O = L-homocysteine + adenosine. It functions in the pathway amino-acid biosynthesis; L-homocysteine biosynthesis; L-homocysteine from S-adenosyl-L-homocysteine: step 1/1. May play a key role in the regulation of the intracellular concentration of adenosylhomocysteine. The chain is Adenosylhomocysteinase from Rhizobium rhizogenes (strain K84 / ATCC BAA-868) (Agrobacterium radiobacter).